The primary structure comprises 336 residues: Biotin synthase (336 aa).

In terms of domain architecture, Radical SAM core spans 54 to 281 (NAIQLSTLLS…KAMVRLSAGR (228 aa)). Positions 69, 73, and 76 each coordinate [4Fe-4S] cluster. [2Fe-2S] cluster is bound by residues cysteine 113, cysteine 144, cysteine 204, and arginine 276.

This sequence belongs to the radical SAM superfamily. Biotin synthase family. In terms of assembly, homodimer. [4Fe-4S] cluster is required as a cofactor. Requires [2Fe-2S] cluster as cofactor.

The catalysed reaction is (4R,5S)-dethiobiotin + (sulfur carrier)-SH + 2 reduced [2Fe-2S]-[ferredoxin] + 2 S-adenosyl-L-methionine = (sulfur carrier)-H + biotin + 2 5'-deoxyadenosine + 2 L-methionine + 2 oxidized [2Fe-2S]-[ferredoxin]. The protein operates within cofactor biosynthesis; biotin biosynthesis; biotin from 7,8-diaminononanoate: step 2/2. In terms of biological role, catalyzes the conversion of dethiobiotin (DTB) to biotin by the insertion of a sulfur atom into dethiobiotin via a radical-based mechanism. The sequence is that of Biotin synthase from Burkholderia pseudomallei (strain 1710b).